Here is a 487-residue protein sequence, read N- to C-terminus: Glutamyl-tRNA(Gln) amidotransferase subunit A (487 aa).

Residues lysine 77 and serine 152 each act as charge relay system in the active site. The active-site Acyl-ester intermediate is serine 176.

It belongs to the amidase family. GatA subfamily. As to quaternary structure, heterotrimer of A, B and C subunits.

It catalyses the reaction L-glutamyl-tRNA(Gln) + L-glutamine + ATP + H2O = L-glutaminyl-tRNA(Gln) + L-glutamate + ADP + phosphate + H(+). In terms of biological role, allows the formation of correctly charged Gln-tRNA(Gln) through the transamidation of misacylated Glu-tRNA(Gln) in organisms which lack glutaminyl-tRNA synthetase. The reaction takes place in the presence of glutamine and ATP through an activated gamma-phospho-Glu-tRNA(Gln). This Ligilactobacillus salivarius (strain UCC118) (Lactobacillus salivarius) protein is Glutamyl-tRNA(Gln) amidotransferase subunit A.